Reading from the N-terminus, the 87-residue chain is MTENEKVTRNVQGRVVSNKADKTITVLVERRVRHPLYGKYIRRSSKMQAHDEGNECQVGDVVTIEQCRPISKSKAWRLVKVLERAAQ.

The protein belongs to the universal ribosomal protein uS17 family. As to quaternary structure, part of the 30S ribosomal subunit.

One of the primary rRNA binding proteins, it binds specifically to the 5'-end of 16S ribosomal RNA. The sequence is that of Small ribosomal subunit protein uS17 from Alkalilimnicola ehrlichii (strain ATCC BAA-1101 / DSM 17681 / MLHE-1).